The sequence spans 593 residues: NADH-quinone oxidoreductase subunit C/D (593 aa).

The segment at Met-1–Gln-184 is NADH dehydrogenase I subunit C. The segment at Asp-208–Arg-593 is NADH dehydrogenase I subunit D.

This sequence in the N-terminal section; belongs to the complex I 30 kDa subunit family. In the C-terminal section; belongs to the complex I 49 kDa subunit family. NDH-1 is composed of 13 different subunits. Subunits NuoB, CD, E, F, and G constitute the peripheral sector of the complex.

The protein localises to the cell inner membrane. The enzyme catalyses a quinone + NADH + 5 H(+)(in) = a quinol + NAD(+) + 4 H(+)(out). Functionally, NDH-1 shuttles electrons from NADH, via FMN and iron-sulfur (Fe-S) centers, to quinones in the respiratory chain. The immediate electron acceptor for the enzyme in this species is believed to be ubiquinone. Couples the redox reaction to proton translocation (for every two electrons transferred, four hydrogen ions are translocated across the cytoplasmic membrane), and thus conserves the redox energy in a proton gradient. The protein is NADH-quinone oxidoreductase subunit C/D of Pseudomonas paraeruginosa (strain DSM 24068 / PA7) (Pseudomonas aeruginosa (strain PA7)).